The following is a 196-amino-acid chain: UPF0316 protein LBL_2483 (196 aa).

The next 3 helical transmembrane spans lie at 12 to 32 (YCVL…IGTI), 44 to 64 (IAAS…TQVI), and 70 to 90 (ALCY…GMIL).

The protein belongs to the UPF0316 family.

Its subcellular location is the cell membrane. The polypeptide is UPF0316 protein LBL_2483 (Leptospira borgpetersenii serovar Hardjo-bovis (strain L550)).